We begin with the raw amino-acid sequence, 139 residues long: Growth factor (139 aa).

A signal peptide spans 1-19 (MSMKYLMLLFATMIIRSFA). Asn34 carries N-linked (GlcNAc...) asparagine; by host glycosylation. The EGF-like domain occupies 41–81 (AIRLCGPEGDGYCLHGDCIHARDINGMYCRCSHGYTGIRCQ). Disulfide bonds link Cys45/Cys58, Cys53/Cys69, and Cys71/Cys80. An N-linked (GlcNAc...) asparagine; by host glycan is attached at Asn95.

Belongs to the orthopoxvirus OPG019 family.

The protein resides in the secreted. Functionally, stimulates cellular proliferation (hyperplasia)and mobility around infected cells to promote rapid and efficient spread of infection. In Camelus, this protein is Growth factor (OPG019).